Reading from the N-terminus, the 309-residue chain is Foldase protein PrsA 2 (309 aa).

The signal sequence occupies residues 1–22 (MKQMNKLITGVVTLATVVTLSA). The N-palmitoyl cysteine moiety is linked to residue Cys-23. Cys-23 is lipidated: S-diacylglycerol cysteine. Residues 146-241 (TPTMTAEIMQ…RTYHIIKVTK (96 aa)) form the PpiC domain.

The protein belongs to the PrsA family.

The protein localises to the cell membrane. It catalyses the reaction [protein]-peptidylproline (omega=180) = [protein]-peptidylproline (omega=0). Functionally, plays a major role in protein secretion by helping the post-translocational extracellular folding of several secreted proteins. This is Foldase protein PrsA 2 from Streptococcus pyogenes serotype M6 (strain ATCC BAA-946 / MGAS10394).